The primary structure comprises 283 residues: Aldo-keto reductase MSMEG_2407/MSMEI_2346 (283 aa).

Catalysis depends on Tyr-58, which acts as the Proton donor. Gly-196, Leu-198, Val-200, Ile-236, Arg-238, Ser-239, Ala-240, Arg-244, Ser-247, Asn-248, and Arg-274 together coordinate NADPH.

This sequence belongs to the aldo/keto reductase family. Monomer.

With respect to regulation, inhibited by the antituberculosis drug isoniazid (INH). In terms of biological role, catalyzes the NADPH-dependent reduction of dicarbonyls. Exhibits narrow substrate specificity, with preferential activity against the dicarbonyl substrates phenylglyoxal and methylglyoxal. Exhibits weak activity with ethyl-2-methyl acetoacetate. Cannot use NADH. May play an important role in the detoxification of methylglyoxal. The protein is Aldo-keto reductase MSMEG_2407/MSMEI_2346 of Mycolicibacterium smegmatis (strain ATCC 700084 / mc(2)155) (Mycobacterium smegmatis).